The chain runs to 432 residues: uncharacterized protein (432 aa).

Helical transmembrane passes span 7–27, 29–49, 68–88, 124–144, 156–176, 196–216, 241–261, 266–286, 291–311, 326–346, 358–378, 379–399, and 412–432; these read FIGL…PDIY, GIVI…PLPV, EALT…FMLA, FLSM…IALG, FLLL…IIGS, VGFP…YIYF, LVIF…SEIF, FDSV…LVEV, KIDW…GVIV, ILGN…TIIL, IIVP…LILA, VGMS…NAIV, and IGMI…ILYL.

This sequence belongs to the CitM (TC 2.A.11) transporter family.

It is found in the cell membrane. This is an uncharacterized protein from Methanocaldococcus jannaschii (strain ATCC 43067 / DSM 2661 / JAL-1 / JCM 10045 / NBRC 100440) (Methanococcus jannaschii).